The primary structure comprises 525 residues: GMP synthase [glutamine-hydrolyzing] (525 aa).

A Glutamine amidotransferase type-1 domain is found at 9 to 207 (RILILDFGSQ…VRDICQCEAL (199 aa)). Cys86 acts as the Nucleophile in catalysis. Active-site residues include His181 and Glu183. One can recognise a GMPS ATP-PPase domain in the interval 208–400 (WTPAKIIDDA…LGLPYDMLYR (193 aa)). An ATP-binding site is contributed by 235–241 (SGGVDSS).

In terms of assembly, homodimer.

It carries out the reaction XMP + L-glutamine + ATP + H2O = GMP + L-glutamate + AMP + diphosphate + 2 H(+). The protein operates within purine metabolism; GMP biosynthesis; GMP from XMP (L-Gln route): step 1/1. Functionally, catalyzes the synthesis of GMP from XMP. This is GMP synthase [glutamine-hydrolyzing] from Salmonella paratyphi B (strain ATCC BAA-1250 / SPB7).